The sequence spans 268 residues: Shikimate dehydrogenase (NADP(+)) (268 aa).

Residues 15 to 17 and threonine 60 contribute to the shikimate site; that span reads SKS. Residue lysine 64 is the Proton acceptor of the active site. 2 residues coordinate shikimate: asparagine 85 and aspartate 101. NADP(+) contacts are provided by residues 121-125 and leucine 208; that span reads GAGGS. Shikimate is bound at residue tyrosine 210. Glycine 230 is an NADP(+) binding site.

The protein belongs to the shikimate dehydrogenase family. Homodimer.

It catalyses the reaction shikimate + NADP(+) = 3-dehydroshikimate + NADPH + H(+). The protein operates within metabolic intermediate biosynthesis; chorismate biosynthesis; chorismate from D-erythrose 4-phosphate and phosphoenolpyruvate: step 4/7. Functionally, involved in the biosynthesis of the chorismate, which leads to the biosynthesis of aromatic amino acids. Catalyzes the reversible NADPH linked reduction of 3-dehydroshikimate (DHSA) to yield shikimate (SA). This is Shikimate dehydrogenase (NADP(+)) from Helicobacter hepaticus (strain ATCC 51449 / 3B1).